Consider the following 102-residue polypeptide: Keratinocyte differentiation-associated protein (102 aa).

The first 22 residues, 1–22 (MKIPILPVVALLSLLALHAVQG), serve as a signal peptide directing secretion.

As to expression, expression restricted to suprabasal keratinocytes of the epidermis.

It is found in the secreted. Its function is as follows. May act as a soluble regulator of keratinocyte differentiation. May play an important role in embryonic skin morphogenesis. This chain is Keratinocyte differentiation-associated protein, found in Mus musculus (Mouse).